Reading from the N-terminus, the 367-residue chain is MSSNSFGKLFTVTTFGESHGPAIGCVIDGCPPGLALDAAEFAHDLQRRATGKSRHTSARREADEVEILSGVYEGLTTGTPIALLIRNTDQRSKDYANIGQQFRPGHADYSYWHKYGIRDPRGGGRSSARETTMRVAAGVVAKKWLAERFGVTVRGYLSQLGEITPAGFDWSAVKDNPFFWPHAAQVPELEAYMDALRKSGDSVGACVDVVADNVPPGWGEPIYGKLDGDLAAALMSINAVKGVEIGDGFASAVQKGTEHRDLLTPQGFASNHAGGILGGISTGQPVVASIVLKPTSSLRLPGPSLDTSGNVVEVVTTGRHDPCVGIRATPIAEAMVAMVLMDQALRHRAQCGDVGTITPRIPGQFDG.

NADP(+) is bound by residues arginine 48 and arginine 54. FMN contacts are provided by residues 125 to 127 (RSS), 238 to 239 (NA), glycine 278, 293 to 297 (KPTSS), and arginine 319.

This sequence belongs to the chorismate synthase family. In terms of assembly, homotetramer. It depends on FMNH2 as a cofactor.

It catalyses the reaction 5-O-(1-carboxyvinyl)-3-phosphoshikimate = chorismate + phosphate. It functions in the pathway metabolic intermediate biosynthesis; chorismate biosynthesis; chorismate from D-erythrose 4-phosphate and phosphoenolpyruvate: step 7/7. Its function is as follows. Catalyzes the anti-1,4-elimination of the C-3 phosphate and the C-6 proR hydrogen from 5-enolpyruvylshikimate-3-phosphate (EPSP) to yield chorismate, which is the branch point compound that serves as the starting substrate for the three terminal pathways of aromatic amino acid biosynthesis. This reaction introduces a second double bond into the aromatic ring system. This is Chorismate synthase from Stenotrophomonas maltophilia (strain R551-3).